A 203-amino-acid polypeptide reads, in one-letter code: Small ribosomal subunit protein uS4c (203 aa).

A disordered region spans residues 15-42 (LGALPGLTSKRPRAGSDPRNQELSGNKS). One can recognise an S4 RNA-binding domain in the interval 89-150 (MRLDNILFRL…DQKSKAMIQN (62 aa)).

Belongs to the universal ribosomal protein uS4 family. As to quaternary structure, part of the 30S ribosomal subunit. Contacts protein S5. The interaction surface between S4 and S5 is involved in control of translational fidelity.

The protein localises to the plastid. It localises to the chloroplast. In terms of biological role, one of the primary rRNA binding proteins, it binds directly to 16S rRNA where it nucleates assembly of the body of the 30S subunit. Functionally, with S5 and S12 plays an important role in translational accuracy. The polypeptide is Small ribosomal subunit protein uS4c (rps4) (Oenothera elata subsp. hookeri (Hooker's evening primrose)).